Reading from the N-terminus, the 178-residue chain is RNA pyrophosphohydrolase (178 aa).

Positions 18–171 (PYRPCVGLMV…KRKVYEQVVA (154 aa)) constitute a Nudix hydrolase domain. A Nudix box motif is present at residues 59-80 (GGIDKGEDPAQAALRELYEETG).

It belongs to the Nudix hydrolase family. RppH subfamily. It depends on a divalent metal cation as a cofactor.

Its function is as follows. Accelerates the degradation of transcripts by removing pyrophosphate from the 5'-end of triphosphorylated RNA, leading to a more labile monophosphorylated state that can stimulate subsequent ribonuclease cleavage. The protein is RNA pyrophosphohydrolase of Brucella melitensis biotype 2 (strain ATCC 23457).